The chain runs to 2601 residues: MKRKVVNTHKLRLSPNEEAFILKEDYERRRKLRLLQVREQERDIALQIREDIKQRRNQQFTRLAEELRAEWEESQTQKIQNLEKLYLASLRSMGEGHRQAKENEPDLDALAQRAAERKRKADLRHKEALKVQKNQKEILLKQKTWHIKARKEALLVEKERSAKITSLPPPPPTLFENIEVKRISAVKTNSSTYHHLHTFVNRETDTKRPDARLAAEEEAKRLEELQKQAAQERMERFEKAHVRGFQAMKKIHLAQNQEKLMKELKQLQQEDLARRRQTVAQMPPQLVELPYKRSEMKEDWQRELEFAFEDMYNADRKVKGNLILHLEPEPLPTVTNQIQDEELDLSMEQENLGAAEDLPVTEAEICSSETDVPLVMKTQQIPSKVLFKKLLNKIRSQKSLWTIKSMSEDESEMITTVSEIESKAPTVESGTIASKERTLSSGQEQVVESDTLTIESGPLASEDKPLSCGTNSGKEQEINETLPITTVAQSSVLLHPQEAAARIRMSARQKQIMEIEEQKQKQLELLEQIEQQKLRLETDCFRAQLEEEKRKKTQPTGVGIAPASCPVISDEDSHRQMIRNYQHQLLQQNRLHRQSVETARKQLLEYQTMLKGRCPSVSAPSLITDSVISVPSWKSERPTAISEHWDQGQRLKLSPNKYQPIQPIQTSKLEQDHFQVARQNHFPQRQVETTETLRASDILTNQALESQEHLRQFSQTETQQRDYKLVPKDSETLSRALSHDRQLISQDARKISETFGATTFQSLESQQLFSENSENISYHLTEPSSFVPLVPQHSFSSLPVKVESGKIQEPFSAMSKSTVSTSHSIISQMHDRPLLPSENITAQQGNMKALQEQLDLQKKVLQATQEAQEQLLLCKQKEVEQQTGLSVFLPLVTPDSSALLPSAKADLGRIQESSPTKNNIAVSSDHHVISQLQDKRLSLSQPILSQQNNFKFLQEQLNIQKDSLQARREAQEVLYVHKQSELDRRVCSEQAEPSFPFQVAQHTFTSLPSADTKSGKIQEQHSSKSEKGLVSCQSDIPISQDGSLSFLQQFLPLHDSLKLLQEQLTKQRDTLQARHEAQVELLLHRQRDLGDSKSGLVSSSSSPVVVQHSVASQASAKAEPRRIQELYLSEKENVGPSCHLIIPTFQDKSLSFPQHSLAQQENLTILQEQSQIQRVILGAKEGTQEFVHTESELEKRISSEQTGTSSSLSQVDESERFQECISIKSDSTIPLSHPKIPRCQERLLRVSQHMLPLQDNLEEHQAWLDTEKEAFHFSQKTQENTSSEQTGSSSFIPQLVQLSFTSLASAESGTILEPLFTESESKIFSSHLQIPQLQDRLLRISQLIQPQQDNLKALQEQLATQREAIILARQEAREELLLHQSEWEGRISPEQVDTSSLPLVPQHSFASLPLNESERNQEPCSINSDNIVSSGHSEIPTLPDGLLGLSHLVLPQQDNLIALEEHLHAQTDFLPSIEKTQKELVLSKPCKFEEKVSSEHFIQSHHGDLQALQQQLDTQKKAIRSIQEVQEELLLQRLSELEKRVSSEQVCSSSFVSQVPVADSERTQKSFPTKSNDTLPSSHREIPRLQDRLLSLSKPILPQQDNMTAQLDAQREVMYSYEKPQEELSLNKQRKLNKSESAEHTIPSLFLPKETEHSFIPLPFAEAKPKSTCELYSSQNEHAAPPSNPVIPGFQDRLLSFSQSVLTQQDNLGLQKQLDLQREVLHYSQKAQEKLLVQRQTALQQQIQKHEETLKDFFKDSQISKPTVENDLKTQKMGQLRDWFPNTQDLAGNDQENIRHADRNNSDDNHLASEDTSAKQSGEHLEKDLGRRSSKPPVAKVKCGLDLNQHELSAIQEVESPAIGRTSILGKPGIYEDRDPLRVSISREQSFFGSPLAHDPFSCLQLVGQENVCGDDYDEAVKLKESVVENHAVLSYAVEEEHAYLGPTVKPDDKAKTLSYEPLSSATVSTGSLLSYENTDLSLTDPESFSEHMDDSKQESTTSKEEETNIISSIVPSTQDIYQRQNSSDVHKSLLPAVDETTCGHTHFQQMIDKYINEANLIPEKTDLQELEHIFPNLHHQLFKPLEPHPDFDLSSSSSGISPDNRDFYQRSDSSSESHCATGLSKSTVYFTALRRTSMHSSLNTSPNQQPDTNLAHVGAHSFATENIIGGSEQCFEQLQPEYSSQEESQHADLPSIFSIEARDSSQGMKNQNYPSEEHTEILQNKKKIVHFQLSIGNLSSVYSSSDEANVFDQLNVQHSTPCGSNSSECSTKHQLESRKESMGFEELSKRGVVTMLQSQGLIEDNKNETCRVLDINPQVEETDSRLCVRTVEMGTSIQAPYSLTTQNEKYFENSAETDIPKITKKLSQLGESELFASSGSFSLQSSIPVWETETGHGIMEEPELTLISTTDTSIAEMDFANLTLEEKSENEAKCFFQVSEFLPLVSATEASDYPAVSELSIEKPRTASTETPRRLTPVPGSLQEAFIKRKKSFMERSHQRQKEIRNKIHVSENSQIKTVKEKPSISSSVSRLKGVNKVRASFPEDRKTTQALRHQRGLRLYNQLAEVKQQKEEKTKQEAYAQNRARAKEFHKKTLEKLRAKNTC.

Positions 1–560 are necessary for centriole targeting and microtubule association; that stretch reads MKRKVVNTHK…KKTQPTGVGI (560 aa). Ser14 bears the Phosphoserine mark. Coiled-coil stretches lie at residues 207–273 and 500–552; these read KRPD…EDLA and AARI…KRKK. Residues Ser654 and Ser938 each carry the phosphoserine modification. The tract at residues 1008-1029 is disordered; the sequence is PSADTKSGKIQEQHSSKSEKGL. The span at 1013-1027 shows a compositional bias: basic and acidic residues; that stretch reads KSGKIQEQHSSKSEK. Coiled coils occupy residues 1053–1082 and 1498–1544; these read LHDS…VELL and IQSH…VSSE. The disordered stretch occupies residues 1558–1580; it reads ADSERTQKSFPTKSNDTLPSSHR. The segment covering 1565–1577 has biased composition (polar residues); it reads KSFPTKSNDTLPS. Ser1637 carries the phosphoserine modification. The stretch at 1728–1758 forms a coiled coil; sequence QEKLLVQRQTALQQQIQKHEETLKDFFKDSQ. Composition is skewed to basic and acidic residues over residues 1795 to 1827, 1985 to 2003, and 2100 to 2112; these read RHAD…DLGR, FSEH…KEEE, and DNRD…DSSS. 3 disordered regions span residues 1795–1834, 1979–2004, and 2085–2117; these read RHAD…KPPV, LTDP…EEET, and HPDF…SHCA. At Thr2473 the chain carries Phosphothreonine. An ALMS motif region spans residues 2478–2601; that stretch reads SLQEAFIKRK…LEKLRAKNTC (124 aa). Residues 2556-2581 adopt a coiled-coil conformation; the sequence is RLYNQLAEVKQQKEEKTKQEAYAQNR.

In terms of assembly, interacts (via ALMS motif) with microtubules; this interaction is direct.

Its subcellular location is the cytoplasm. The protein resides in the cytoskeleton. The protein localises to the microtubule organizing center. It localises to the centrosome. It is found in the centriole. Its subcellular location is the spindle. Centriole-enriched microtubule-binding protein involved in centriole biogenesis. Essential for the generation of the distal portion of new-born centrioles in a CPAP- and CEP120-mediated elongation dependent manner during the cell cycle S/G2 phase after formation of the initiating cartwheel structure. Required for the recruitment of centriolar proteins, such as POC1B, POC5 and CEP135, into the distal portion of centrioles. Also required for centriole-to-centrosome conversion during mitotic progression, but is dispensable for cartwheel removal or centriole disengagement. Binds to and stabilizes centriolar microtubule. May be involved in ciliogenesis. The sequence is that of Centrosomal protein of 295 kDa from Homo sapiens (Human).